Here is a 465-residue protein sequence, read N- to C-terminus: 3-isopropylmalate dehydratase large subunit (465 aa).

Residues cysteine 347, cysteine 407, and cysteine 410 each coordinate [4Fe-4S] cluster. Residues 417 to 443 form a disordered region; it reads TLKPGERSASTSNRNFEGRQGKGGRTH.

The protein belongs to the aconitase/IPM isomerase family. LeuC type 1 subfamily. As to quaternary structure, heterodimer of LeuC and LeuD. Requires [4Fe-4S] cluster as cofactor.

It carries out the reaction (2R,3S)-3-isopropylmalate = (2S)-2-isopropylmalate. It functions in the pathway amino-acid biosynthesis; L-leucine biosynthesis; L-leucine from 3-methyl-2-oxobutanoate: step 2/4. Its function is as follows. Catalyzes the isomerization between 2-isopropylmalate and 3-isopropylmalate, via the formation of 2-isopropylmaleate. The chain is 3-isopropylmalate dehydratase large subunit from Thermobifida fusca (strain YX).